Consider the following 418-residue polypeptide: Arrestin domain-containing protein 4 (418 aa).

2 consecutive short sequence motifs (PPxY motif) follow at residues 350 to 353 (PPNY) and 395 to 398 (PPLY).

The protein belongs to the arrestin family. As to quaternary structure, interacts with ADRB2. Interacts (via PPxY motifs) with ITCH, NEDD4L and WWP2. Interacts with AVPR2. Identified in a complex containing at least ARRDC4, AVPR2 and HGS. Interacts with SLC11A2; controls the incorporation of SLC11A2 into extracellular vesicles through an ubiquitination-dependent mechanism. Interacts with TRIM65.

Its subcellular location is the early endosome. The protein localises to the cell membrane. The protein resides in the cytoplasmic vesicle. Functionally, functions as an adapter recruiting ubiquitin-protein ligases to their specific substrates. Plays a role in endocytosis of activated G protein-coupled receptors (GPCRs). Through an ubiquitination-dependent mechanism also plays a role in the incorporation of SLC11A2 into extracellular vesicles. May play a role in glucose uptake. Participates in innate immune response by promoting IFIH1/MDA5 activation through interaction with TRIM65. The protein is Arrestin domain-containing protein 4 (ARRDC4) of Homo sapiens (Human).